The sequence spans 260 residues: Hydroxyethylthiazole kinase (260 aa).

Residue methionine 38 coordinates substrate. Residues arginine 114 and threonine 159 each coordinate ATP. A substrate-binding site is contributed by glycine 186.

It belongs to the Thz kinase family. It depends on Mg(2+) as a cofactor.

The enzyme catalyses 5-(2-hydroxyethyl)-4-methylthiazole + ATP = 4-methyl-5-(2-phosphooxyethyl)-thiazole + ADP + H(+). It functions in the pathway cofactor biosynthesis; thiamine diphosphate biosynthesis; 4-methyl-5-(2-phosphoethyl)-thiazole from 5-(2-hydroxyethyl)-4-methylthiazole: step 1/1. Functionally, catalyzes the phosphorylation of the hydroxyl group of 4-methyl-5-beta-hydroxyethylthiazole (THZ). The chain is Hydroxyethylthiazole kinase from Helicobacter pylori (strain HPAG1).